A 579-amino-acid chain; its full sequence is GPI alpha-1,2-mannosyltransferase 4 (579 aa).

The next 8 membrane-spanning stretches (helical) occupy residues 131-151 (LLLT…APPM), 156-173 (WNAL…VFYT), 180-200 (IEGL…TWGP), 216-236 (LGGI…FAVV), 258-278 (ALVL…TDSW), 369-389 (YLLL…HQEA), 391-411 (FLIP…QPVP), and 416-436 (VVLF…GGLV).

Belongs to the glycosyltransferase 22 family. PIGZ subfamily. Widely expressed at low level, with highest level in brain and colon.

The protein resides in the endoplasmic reticulum membrane. The protein operates within glycolipid biosynthesis; glycosylphosphatidylinositol-anchor biosynthesis. In terms of biological role, alpha-1,2-mannosyltransferase that catalyzes the transfer of the fourth mannose, via an alpha-1,2 bond, from a dolichol-phosphate-mannose (Dol-P-Man) to an alpha-D-Man-(1-&gt;2)-alpha-D-Man-(1-&gt;6)-2-PEtn-alpha-D-Man-(1-&gt;4)-alpha-D-GlcN-(1-&gt;6)-(1-radyl,2-acyl-sn-glycero-3-phospho)-2-acyl-inositol (also termed H6) intermediate and participates in the twelfth step of the glycosylphosphatidylinositol-anchor biosynthesis. The presence of a fourth mannose in GPI is facultative, suggesting that it only exists in some tissues. In Homo sapiens (Human), this protein is GPI alpha-1,2-mannosyltransferase 4.